The sequence spans 319 residues: Acetyl-coenzyme A carboxylase carboxyl transferase subunit alpha (319 aa).

The 258-residue stretch at Glu39 to Glu296 folds into the CoA carboxyltransferase C-terminal domain.

It belongs to the AccA family. In terms of assembly, acetyl-CoA carboxylase is a heterohexamer composed of biotin carboxyl carrier protein (AccB), biotin carboxylase (AccC) and two subunits each of ACCase subunit alpha (AccA) and ACCase subunit beta (AccD).

It localises to the cytoplasm. It carries out the reaction N(6)-carboxybiotinyl-L-lysyl-[protein] + acetyl-CoA = N(6)-biotinyl-L-lysyl-[protein] + malonyl-CoA. The protein operates within lipid metabolism; malonyl-CoA biosynthesis; malonyl-CoA from acetyl-CoA: step 1/1. In terms of biological role, component of the acetyl coenzyme A carboxylase (ACC) complex. First, biotin carboxylase catalyzes the carboxylation of biotin on its carrier protein (BCCP) and then the CO(2) group is transferred by the carboxyltransferase to acetyl-CoA to form malonyl-CoA. This is Acetyl-coenzyme A carboxylase carboxyl transferase subunit alpha from Blochmanniella pennsylvanica (strain BPEN).